A 563-amino-acid chain; its full sequence is Arginine--tRNA ligase (563 aa).

A 'HIGH' region motif is present at residues 121-131 (PNIAKPFSIGH).

This sequence belongs to the class-I aminoacyl-tRNA synthetase family. Monomer.

The protein resides in the cytoplasm. The catalysed reaction is tRNA(Arg) + L-arginine + ATP = L-arginyl-tRNA(Arg) + AMP + diphosphate. This chain is Arginine--tRNA ligase, found in Streptococcus pneumoniae (strain P1031).